The sequence spans 236 residues: Aspartate/glutamate leucyltransferase (236 aa).

It belongs to the R-transferase family. Bpt subfamily.

The protein localises to the cytoplasm. The catalysed reaction is N-terminal L-glutamyl-[protein] + L-leucyl-tRNA(Leu) = N-terminal L-leucyl-L-glutamyl-[protein] + tRNA(Leu) + H(+). The enzyme catalyses N-terminal L-aspartyl-[protein] + L-leucyl-tRNA(Leu) = N-terminal L-leucyl-L-aspartyl-[protein] + tRNA(Leu) + H(+). In terms of biological role, functions in the N-end rule pathway of protein degradation where it conjugates Leu from its aminoacyl-tRNA to the N-termini of proteins containing an N-terminal aspartate or glutamate. The polypeptide is Aspartate/glutamate leucyltransferase (Halorhodospira halophila (strain DSM 244 / SL1) (Ectothiorhodospira halophila (strain DSM 244 / SL1))).